A 169-amino-acid polypeptide reads, in one-letter code: Peptide methionine sulfoxide reductase MsrA (169 aa).

The active site involves C10.

This sequence belongs to the MsrA Met sulfoxide reductase family.

It carries out the reaction L-methionyl-[protein] + [thioredoxin]-disulfide + H2O = L-methionyl-(S)-S-oxide-[protein] + [thioredoxin]-dithiol. The enzyme catalyses [thioredoxin]-disulfide + L-methionine + H2O = L-methionine (S)-S-oxide + [thioredoxin]-dithiol. Has an important function as a repair enzyme for proteins that have been inactivated by oxidation. Catalyzes the reversible oxidation-reduction of methionine sulfoxide in proteins to methionine. This chain is Peptide methionine sulfoxide reductase MsrA, found in Streptococcus agalactiae serotype Ia (strain ATCC 27591 / A909 / CDC SS700).